A 616-amino-acid chain; its full sequence is tRNA 5-methylaminomethyl-2-thiouridine biosynthesis bifunctional protein MnmC (616 aa).

A tRNA (mnm(5)s(2)U34)-methyltransferase region spans residues 1–232 (MLRTIVPARL…KRHCMSARFA (232 aa)). The interval 249–616 (IGGGVAGAAA…ARFAGNRKTA (368 aa)) is FAD-dependent cmnm(5)s(2)U34 oxidoreductase.

In the N-terminal section; belongs to the methyltransferase superfamily. tRNA (mnm(5)s(2)U34)-methyltransferase family. This sequence in the C-terminal section; belongs to the DAO family. It depends on FAD as a cofactor.

Its subcellular location is the cytoplasm. It carries out the reaction 5-aminomethyl-2-thiouridine(34) in tRNA + S-adenosyl-L-methionine = 5-methylaminomethyl-2-thiouridine(34) in tRNA + S-adenosyl-L-homocysteine + H(+). In terms of biological role, catalyzes the last two steps in the biosynthesis of 5-methylaminomethyl-2-thiouridine (mnm(5)s(2)U) at the wobble position (U34) in tRNA. Catalyzes the FAD-dependent demodification of cmnm(5)s(2)U34 to nm(5)s(2)U34, followed by the transfer of a methyl group from S-adenosyl-L-methionine to nm(5)s(2)U34, to form mnm(5)s(2)U34. This is tRNA 5-methylaminomethyl-2-thiouridine biosynthesis bifunctional protein MnmC from Thiobacillus denitrificans (strain ATCC 25259 / T1).